A 20-amino-acid chain; its full sequence is Neurotoxin BmK 18(2) (20 aa).

The LCN-type CS-alpha/beta domain maps to 2-20 (RDAYIAEDYDCVYHCARDA).

Belongs to the long (4 C-C) scorpion toxin superfamily. Sodium channel inhibitor family. Alpha subfamily. In terms of tissue distribution, expressed by the venom gland.

Its subcellular location is the secreted. In terms of biological role, binds to sodium channels (Nav) and inhibits the inactivation of the activated channels, thereby blocking neuronal transmission. This chain is Neurotoxin BmK 18(2), found in Olivierus martensii (Manchurian scorpion).